A 358-amino-acid chain; its full sequence is Carbohydrate sulfotransferase 10 (358 aa).

The Cytoplasmic portion of the chain corresponds to 1–6 (MHHQWL). A helical; Signal-anchor for type II membrane protein transmembrane segment spans residues 7 to 27 (LLAACFWVIFMFMVASKFITL). The Lumenal segment spans residues 28–358 (TFKDPDGYGA…GYRVPDFLLN (331 aa)). Residue Asn-101 is glycosylated (N-linked (GlcNAc...) asparagine). Residues 129 to 135 (PKVGNTQ) and 191 to 199 (RDPFERLIS) each bind 3'-phosphoadenylyl sulfate. N-linked (GlcNAc...) asparagine glycosylation is present at Asn-318.

It belongs to the sulfotransferase 2 family. Predominantly expressed in hypertrophic, prehypertrophic and proliferative chondrocytes at E12 but is down-regulated in epiphyseal chondrocytes.

The protein resides in the golgi apparatus membrane. Catalyzes the transfer of sulfate to position 3 of terminal glucuronic acid of both protein- and lipid-linked oligosaccharides. Participates in biosynthesis of HNK-1 carbohydrate structure, a sulfated glucuronyl-lactosaminyl residue carried by many neural recognition molecules, which is involved in cell interactions during ontogenetic development and in synaptic plasticity in the adult. The chain is Carbohydrate sulfotransferase 10 (CHST10) from Gallus gallus (Chicken).